A 446-amino-acid polypeptide reads, in one-letter code: Packaging protein 1 (446 aa).

Residues 1–72 form a disordered region; sequence MEEKAGLRHL…SQVSKSKKQR (72 aa). Residues 10-21 are compositionally biased toward polar residues; sequence LQNQQNEPSQDP. Basic and acidic residues predominate over residues 32–43; sequence HSDRNHLNKEAE. 170 to 177 lines the ATP pocket; it reads GPTGCGKS. Positions 439–446 are DNA-binding; that stretch reads RYYHSKKK.

This sequence belongs to the adenoviridae packaging protein 1 family. In terms of assembly, homodimer. Part of a genome packaging complex composed of packaging proteins 1, 2 and 3; this complex specifically binds to the packaging sequence on the left end of viral genomic DNA and performs packaging of the viral genome. Interacts with protein 33K.

The protein localises to the virion. It localises to the host nucleus. Its subcellular location is the host nucleoplasm. The protein resides in the host nucleolus. Functionally, component of the packaging machinery which encapsidates the viral DNA into preformed capsids and transcriptional activator of the viral major late promoter (MLP). Binds, along with packaging proteins 2 and 3, to the specific packaging sequence on the left end of viral genomic DNA and displays ATPase activity thereby providing the power stroke of the packaging machinery. The activity of packaging protein IVa2 is stimulated by protein 33K which acts as a terminase. May be the protein that pumps DNA into the capsid powered by ATP hydrolysis. Specifically binds to the 5'-CG-3' nucleotides of the repeats making up the packaging sequence. Component of the DEF-A and DEF-B transcription factors that bind downstream elements of the major late promoter (MLP), and stimulate transcription from the MLP after initiation of viral DNA replication. DEF-A is a heterodimer packaging proteins 1 and 2 and DEF-B is a homodimer of packaging protein 1. This is Packaging protein 1 from Canine adenovirus serotype 1 (strain CLL) (CAdV-1).